Reading from the N-terminus, the 124-residue chain is Small ribosomal subunit protein uS13 (124 aa).

Residues 95–124 form a disordered region; the sequence is GLPVRGQRTHTNARTRKGPRRSVMGKRKKA.

The protein belongs to the universal ribosomal protein uS13 family. As to quaternary structure, part of the 30S ribosomal subunit. Forms a loose heterodimer with protein S19. Forms two bridges to the 50S subunit in the 70S ribosome.

Located at the top of the head of the 30S subunit, it contacts several helices of the 16S rRNA. In the 70S ribosome it contacts the 23S rRNA (bridge B1a) and protein L5 of the 50S subunit (bridge B1b), connecting the 2 subunits; these bridges are implicated in subunit movement. Contacts the tRNAs in the A and P-sites. This Syntrophobacter fumaroxidans (strain DSM 10017 / MPOB) protein is Small ribosomal subunit protein uS13.